Consider the following 376-residue polypeptide: Mitogen-activated protein kinase ERK-A (376 aa).

Positions 38-326 constitute a Protein kinase domain; that stretch reads YIKLAYIGEG…VEEALAHPYL (289 aa). ATP-binding positions include 44–52 and Lys-67; that span reads IGEGAYGMV. The active-site Proton acceptor is the Asp-162. Thr-198 carries the phosphothreonine modification. A TXY motif is present at residues 198-200; sequence TEY. Phosphotyrosine is present on Tyr-200.

Belongs to the protein kinase superfamily. CMGC Ser/Thr protein kinase family. MAP kinase subfamily. Mg(2+) is required as a cofactor. Dually phosphorylated on Thr-198 and Tyr-200, which activates the enzyme. Phosphorylated on tyrosine residue(s) in response to insulin. In third instar larvae, expressed in eye imaginal disks. In adults, expressed in head and body.

It localises to the cytoplasm. The protein resides in the nucleus. The enzyme catalyses L-seryl-[protein] + ATP = O-phospho-L-seryl-[protein] + ADP + H(+). The catalysed reaction is L-threonyl-[protein] + ATP = O-phospho-L-threonyl-[protein] + ADP + H(+). Activated by tyrosine and threonine phosphorylation. Functionally, serine/threonine kinase which acts as an essential component of the MAP kinase signal transduction pathway to regulate proliferation, differentiation and effect cell fate decisions in various tissues. Required downstream of phl/Raf in the sev/sevenless, tor/torso, and EGF receptor homolog Egfr signal transduction pathways. Required for embryonic epithelial tissue repair. During larval development, mediates Ptth/tor signaling leading to the production of ecdysone, a hormone required for the initiation of metamorphosis. This Drosophila melanogaster (Fruit fly) protein is Mitogen-activated protein kinase ERK-A.